The chain runs to 5202 residues: Usherin (5202 aa).

Positions 1-31 (MNCPVLSLGSGFLFQVIEMLIFAYFASISLT) are cleaved as a signal peptide. The Extracellular segment spans residues 32-5042 (ESRGLFPRLE…KSTEFYSELW (5011 aa)). A Laminin N-terminal domain is found at 271-517 (QDFRLYQVAL…AVDEITISGR (247 aa)). N361 and N451 each carry an N-linked (GlcNAc...) asparagine glycan. Cystine bridges form between C518–C527, C520–C536, C538–C549, C552–C572, C575–C584, C577–C605, C608–C617, C620–C638, C641–C655, C643–C662, C664–C673, C676–C691, C694–C708, C696–C715, C717–C726, C729–C744, C747–C759, C749–C766, C768–C777, C780–C792, C795–C808, C797–C815, C817–C826, C829–C844, C847–C861, C849–C868, C870–C879, C882–C897, C900–C913, C902–C920, C922–C931, C934–C948, C951–C963, C953–C970, C972–C982, C985–C999, C1002–C1014, C1004–C1021, C1023–C1032, and C1035–C1050. Laminin EGF-like domains follow at residues 518–574 (CQCH…NCKP), 575–640 (CQCN…VCKP), 641–693 (CDCD…GCSP), 694–746 (CNCN…GCEP), 747–794 (CQCN…NCKA), 795–846 (CDCD…LCLP), 847–899 (CNCD…HCQM), 900–950 (CECD…GCLP), 951–1001 (CSCH…RCQP), and 1002–1052 (CNCH…GCSK). N-linked (GlcNAc...) asparagine glycosylation is found at N587 and N611. N650 is a glycosylation site (N-linked (GlcNAc...) asparagine). N-linked (GlcNAc...) asparagine glycosylation is present at N697. N839, N856, and N862 each carry an N-linked (GlcNAc...) asparagine glycan. The N-linked (GlcNAc...) asparagine glycan is linked to N888. The N-linked (GlcNAc...) asparagine glycan is linked to N944. The N-linked (GlcNAc...) asparagine glycan is linked to N1011. Fibronectin type-III domains lie at 1058-1146 (PPPR…TKPG), 1148-1244 (PEGN…APPQ), 1245-1363 (RLSP…SAPV), and 1364-1468 (FMIP…AAPA). N-linked (GlcNAc...) asparagine glycans are attached at residues N1071, N1151, and N1174. N-linked (GlcNAc...) asparagine glycosylation is found at N1379, N1388, N1479, and N1635. 2 Laminin G-like domains span residues 1517–1709 (MKGI…WEGC) and 1714–1891 (NEGA…LDGC). Residues C1672 and C1709 are joined by a disulfide bond. N-linked (GlcNAc...) asparagine glycosylation is present at N1779. C1862 and C1891 form a disulfide bridge. 14 consecutive Fibronectin type-III domains span residues 1869–1955 (TRGA…AAPQ), 1957–2054 (VPTP…TPQE), 2055–2144 (APQE…LPPE), 2145–2239 (HVDS…TDED), 2243–2330 (GVPA…APPE), 2331–2433 (GTVN…MPPG), 2437–2531 (GVLP…TAED), 2535–2622 (PVVP…TLPG), 2624–2722 (PEGI…TRPS), 2726–2819 (GVQP…THPT), 2820–2923 (VPQN…TLAG), 2927–3018 (RGAN…TCDG), 3022–3112 (GMLP…TPSD), and 3113–3209 (IPTP…CCEE). 14 N-linked (GlcNAc...) asparagine glycosylation sites follow: N1903, N2011, N2014, N2048, N2130, N2182, N2195, N2258, N2285, N2322, N2377, N2382, N2407, and N2413. N-linked (GlcNAc...) asparagine glycans are attached at residues N2581, N2584, N2656, N2710, N2770, and N2788. N2930, N2937, N2970, N3032, and N3099 each carry an N-linked (GlcNAc...) asparagine glycan. 4 N-linked (GlcNAc...) asparagine glycosylation sites follow: N3217, N3330, N3419, and N3433. Cystine bridges form between C3371–C3444 and C3399–C3425. Fibronectin type-III domains are found at residues 3403–3497 (CPAS…TKED), 3501–3589 (GVSP…TQGV), 3592–3682 (SILP…AAPE), 3684–3770 (VWVT…TPMS), 3774–3865 (EIYP…TPEA), 3866–3963 (APMD…TLEA), 3964–4067 (PPQD…SSPS), 4068–4153 (GLRN…TDEA), 4157–4261 (SQLA…TLQA), 4262–4357 (PPEG…AAPS), 4358–4445 (EVSP…ALPE), 4446–4530 (NMDS…TSPS), 4534–4630 (GMEP…TPEI), 4636–4733 (PPPH…TGPA), 4734–4827 (PPEG…THPA), and 4828–4927 (PPSG…SFTT). N3653, N3694, N3733, N3780, and N3849 each carry an N-linked (GlcNAc...) asparagine glycan. The N-linked (GlcNAc...) asparagine glycan is linked to N3984. N4202, N4226, N4317, and N4418 each carry an N-linked (GlcNAc...) asparagine glycan. A disordered region spans residues 4518-4541 (ILSPLVKDRTSPSAPSGMEPPKLQ). N-linked (GlcNAc...) asparagine glycosylation is found at N4564, N4583, N4691, N4754, and N4800. N-linked (GlcNAc...) asparagine glycans are attached at residues N4943 and N4950. The helical transmembrane segment at 5043–5063 (FIVLMAMLGLILLAIFLSLIL) threads the bilayer. The Cytoplasmic portion of the chain corresponds to 5064-5202 (QRKIHKEPYI…ERTTFTDTHL (139 aa)). The PDZ-binding motif lies at 5200–5202 (THL).

In terms of assembly, interacts with collagen IV and fibronectin via its laminin EGF-like domains. Interaction with collagen may be required for stable integration into the basement membrane. Interacts with NINL. Interacts with USH1C. Component of USH2 complex, composed of ADGRV1, PDZD7, USH2A and WHRN. Interacts with ADGRV1/MASS1 (via N-terminal PDZ domain). Interacts (via the cytoplasmic region) with WHRN. Interacts (via the cytoplasmic region) with PDZD7. Interacts (via the cytoplasmic region) with VEZT and MYO7A (via MyTH4-FERM domains); the interaction associates VEZT with the USH2 complex at the stereocilia base. Present in the basement membrane of many, but not all tissues. Expressed in retina, cochlea, small and large intestine, pancreas, bladder, prostate, esophagus, trachea, thymus, salivary glands, placenta, ovary, fallopian tube, uterus and testis. Absent in many other tissues such as heart, lung, liver, kidney and brain. In the retina, it is present in the basement membranes in the Bruch's layer choroid capillary basement membranes, where it localizes just beneath the retinal pigment epithelial cells (at protein level). Weakly expressed. Isoform 2 is expressed in fetal eye, cochlea and heart, and at very low level in brain, CNS, intestine, skeleton, tongue, kidney and lung. Isoform 2 is not expressed in stomach and liver. In adult tissues, isoform 2 is expressed in neural retina and testis, and at low level in brain, heart, kidney and liver. Isoform 1 displays a similar pattern of expression but is expressed at very low level in fetal cochlea.

Its subcellular location is the cell projection. It localises to the stereocilium membrane. The protein localises to the secreted. Functionally, involved in hearing and vision as member of the USH2 complex. In the inner ear, required for the maintenance of the hair bundle ankle formation, which connects growing stereocilia in developing cochlear hair cells. In retina photoreceptors, the USH2 complex is required for the maintenance of periciliary membrane complex that seems to play a role in regulating intracellular protein transport. The chain is Usherin (USH2A) from Homo sapiens (Human).